The chain runs to 320 residues: Cytochrome f (320 aa).

Positions 1 to 35 (MQTRKTLSWIKEEITRSISLSLMLSIITHASLSNA) are cleaved as a signal peptide. Residues tyrosine 36, cysteine 56, cysteine 59, and histidine 60 each coordinate heme. The chain crosses the membrane as a helical span at residues 286–306 (VQGLLFFLTSVLLAQIFLVLK).

This sequence belongs to the cytochrome f family. As to quaternary structure, the 4 large subunits of the cytochrome b6-f complex are cytochrome b6, subunit IV (17 kDa polypeptide, petD), cytochrome f and the Rieske protein, while the 4 small subunits are PetG, PetL, PetM and PetN. The complex functions as a dimer. It depends on heme as a cofactor.

The protein resides in the plastid. It localises to the chloroplast thylakoid membrane. Functionally, component of the cytochrome b6-f complex, which mediates electron transfer between photosystem II (PSII) and photosystem I (PSI), cyclic electron flow around PSI, and state transitions. The sequence is that of Cytochrome f from Pelargonium hortorum (Common geranium).